The following is a 350-amino-acid chain: Small ribosomal subunit protein uS3 (350 aa).

One can recognise a KH type-2 domain in the interval 38-106; it reads IRKMMSRGME…QVQLNILEVK (69 aa). The tract at residues 211–350 is disordered; it reads AEREAQEALQ…TPGTPEKAEE (140 aa). Over residues 222 to 232 the composition is skewed to basic residues; sequence QTRRDRPRRGP. A compositionally biased stretch (low complexity) spans 261–350; sequence NAPAAETAAS…TPGTPEKAEE (90 aa).

Belongs to the universal ribosomal protein uS3 family. In terms of assembly, part of the 30S ribosomal subunit. Forms a tight complex with proteins S10 and S14.

Its function is as follows. Binds the lower part of the 30S subunit head. Binds mRNA in the 70S ribosome, positioning it for translation. This chain is Small ribosomal subunit protein uS3, found in Frankia alni (strain DSM 45986 / CECT 9034 / ACN14a).